Here is a 213-residue protein sequence, read N- to C-terminus: Thiamine-phosphate synthase (213 aa).

Residues 42 to 46 and D77 contribute to the 4-amino-2-methyl-5-(diphosphooxymethyl)pyrimidine site; that span reads QYREK. 2 residues coordinate Mg(2+): D78 and D97. 4-amino-2-methyl-5-(diphosphooxymethyl)pyrimidine is bound at residue S116. 2-[(2R,5Z)-2-carboxy-4-methylthiazol-5(2H)-ylidene]ethyl phosphate is bound at residue 142–144; sequence TIS. K145 serves as a coordination point for 4-amino-2-methyl-5-(diphosphooxymethyl)pyrimidine. 2-[(2R,5Z)-2-carboxy-4-methylthiazol-5(2H)-ylidene]ethyl phosphate contacts are provided by residues G173 and 193–194; that span reads IS.

The protein belongs to the thiamine-phosphate synthase family. The cofactor is Mg(2+).

It carries out the reaction 2-[(2R,5Z)-2-carboxy-4-methylthiazol-5(2H)-ylidene]ethyl phosphate + 4-amino-2-methyl-5-(diphosphooxymethyl)pyrimidine + 2 H(+) = thiamine phosphate + CO2 + diphosphate. The catalysed reaction is 2-(2-carboxy-4-methylthiazol-5-yl)ethyl phosphate + 4-amino-2-methyl-5-(diphosphooxymethyl)pyrimidine + 2 H(+) = thiamine phosphate + CO2 + diphosphate. The enzyme catalyses 4-methyl-5-(2-phosphooxyethyl)-thiazole + 4-amino-2-methyl-5-(diphosphooxymethyl)pyrimidine + H(+) = thiamine phosphate + diphosphate. The protein operates within cofactor biosynthesis; thiamine diphosphate biosynthesis; thiamine phosphate from 4-amino-2-methyl-5-diphosphomethylpyrimidine and 4-methyl-5-(2-phosphoethyl)-thiazole: step 1/1. Functionally, condenses 4-methyl-5-(beta-hydroxyethyl)thiazole monophosphate (THZ-P) and 2-methyl-4-amino-5-hydroxymethyl pyrimidine pyrophosphate (HMP-PP) to form thiamine monophosphate (TMP). The chain is Thiamine-phosphate synthase from Limosilactobacillus fermentum (strain NBRC 3956 / LMG 18251) (Lactobacillus fermentum).